The primary structure comprises 343 residues: Dihydroorotase (343 aa).

Zn(2+)-binding residues include H13 and H15. Substrate contacts are provided by residues 15–17 and N41; that span reads HLR. Zn(2+) is bound by residues K99, H136, and H174. Position 99 is an N6-carboxylysine (K99). H136 lines the substrate pocket. Residue L219 participates in substrate binding. Position 247 (D247) interacts with Zn(2+). D247 is a catalytic residue. Residues H251 and A263 each contribute to the substrate site.

This sequence belongs to the metallo-dependent hydrolases superfamily. DHOase family. Class II DHOase subfamily. In terms of assembly, homodimer. The cofactor is Zn(2+).

The catalysed reaction is (S)-dihydroorotate + H2O = N-carbamoyl-L-aspartate + H(+). The protein operates within pyrimidine metabolism; UMP biosynthesis via de novo pathway; (S)-dihydroorotate from bicarbonate: step 3/3. In terms of biological role, catalyzes the reversible cyclization of carbamoyl aspartate to dihydroorotate. This Shewanella putrefaciens (strain CN-32 / ATCC BAA-453) protein is Dihydroorotase.